A 179-amino-acid polypeptide reads, in one-letter code: tRNA (cytidine(56)-2'-O)-methyltransferase (179 aa).

S-adenosyl-L-methionine is bound by residues Leu-82, 110–114, and 128–135; these read GAEKV and VGNQPHSE.

It belongs to the aTrm56 family. As to quaternary structure, homodimer.

The protein localises to the cytoplasm. The enzyme catalyses cytidine(56) in tRNA + S-adenosyl-L-methionine = 2'-O-methylcytidine(56) in tRNA + S-adenosyl-L-homocysteine + H(+). Functionally, specifically catalyzes the AdoMet-dependent 2'-O-ribose methylation of cytidine at position 56 in tRNAs. The protein is tRNA (cytidine(56)-2'-O)-methyltransferase of Methanocaldococcus jannaschii (strain ATCC 43067 / DSM 2661 / JAL-1 / JCM 10045 / NBRC 100440) (Methanococcus jannaschii).